The chain runs to 276 residues: Undecaprenyl-diphosphatase (276 aa).

6 helical membrane passes run 43–63 (RAMAFNIIIQLAAILAVVWEF), 85–105 (ANLLLAFMPAVVLGVLFADLI), 109–129 (LFNPITVATALVIGGVIMLWA), 183–203 (AATEFSFFLAMPTMVGAAVYS), 214–234 (SDLPVFAIGFVTSFIFAMIAV), and 249–269 (FAWYRIAFGLLILATWQFGWV).

This sequence belongs to the UppP family.

It is found in the cell inner membrane. It catalyses the reaction di-trans,octa-cis-undecaprenyl diphosphate + H2O = di-trans,octa-cis-undecaprenyl phosphate + phosphate + H(+). Its function is as follows. Catalyzes the dephosphorylation of undecaprenyl diphosphate (UPP). Confers resistance to bacitracin. The protein is Undecaprenyl-diphosphatase of Pseudomonas putida (strain W619).